The sequence spans 306 residues: Protein FdhE homolog (306 aa).

Belongs to the FdhE family.

The protein localises to the cytoplasm. Its function is as follows. Necessary for formate dehydrogenase activity. The polypeptide is Protein FdhE homolog (Proteus mirabilis (strain HI4320)).